The sequence spans 199 residues: Probable thymidylate kinase (199 aa).

ATP is bound at residue 9–16 (GIDGCGKT).

Belongs to the thymidylate kinase family.

The catalysed reaction is dTMP + ATP = dTDP + ADP. The protein is Probable thymidylate kinase of Methanococcus maripaludis (strain C7 / ATCC BAA-1331).